Consider the following 483-residue polypeptide: PAT complex subunit CCDC47 (483 aa).

Positions Met1–Ala20 are cleaved as a signal peptide. The Cytoplasmic segment spans residues Lys21–Ser135. Residues Met46–Asp118 form a disordered region. Acidic residues predominate over residues Thr60–Gly104. Residues Tyr105–Asp118 show a composition bias toward basic and acidic residues. Residues Tyr136 to Ile155 traverse the membrane as a helical segment. Residues Gly156 to Met483 are Lumenal-facing. Residue Asn178 is glycosylated (N-linked (GlcNAc...) asparagine). The segment at Gln424 to Met483 is disordered. Residues Gln430–Gln472 are compositionally biased toward basic and acidic residues. A coiled-coil region spans residues Glu451–Lys481. Residues Met473–Met483 are compositionally biased toward basic residues.

Belongs to the CCDC47 family. Component of the PAT complex, composed of WDR83OS/Asterix and CCDC47. The PAT complex is part of the multi-pass translocon (MPT) complex, composed of three subcomplexes, the GEL complex (composed of RAB5IF/OPTI and TMCO1), the BOS complex (composed of NCLN/Nicalin, NOMO1 and TMEM147) and the PAT complex (composed of WDR83OS/Asterix and CCDC47). The MPT complex associates with the SEC61 complex. Interacts with VCP, HSPA5, DERL1, DERL2 and SELENOS.

The protein localises to the endoplasmic reticulum membrane. It localises to the rough endoplasmic reticulum membrane. Its function is as follows. Component of the multi-pass translocon (MPT) complex that mediates insertion of multi-pass membrane proteins into the lipid bilayer of membranes. The MPT complex takes over after the SEC61 complex: following membrane insertion of the first few transmembrane segments of proteins by the SEC61 complex, the MPT complex occludes the lateral gate of the SEC61 complex to promote insertion of subsequent transmembrane regions. Within the MPT complex, the PAT subcomplex sequesters any highly polar regions in the transmembrane domains away from the non-polar membrane environment until they can be buried in the interior of the fully assembled protein. Within the PAT subcomplex, CCDC47 occludes the lateral gate of the SEC61 complex. Involved in the regulation of calcium ion homeostasis in the ER. Required for proper protein degradation via the ERAD (ER-associated degradation) pathway. Has an essential role in the maintenance of ER organization during embryogenesis. The sequence is that of PAT complex subunit CCDC47 (CCDC47) from Pongo abelii (Sumatran orangutan).